The following is a 171-amino-acid chain: Ly6/PLAUR domain-containing protein 6 (171 aa).

The first 25 residues, 1–25, serve as a signal peptide directing secretion; the sequence is MEPSPALAWLLLLSLVADCLKAAQS. Residues 47 to 141 form the UPAR/Ly6 domain; sequence FKCFTCEKAA…PRNETDATFA (95 aa). Cystine bridges form between Cys-49–Cys-77, Cys-52–Cys-61, Cys-70–Cys-96, Cys-102–Cys-121, Cys-107–Cys-118, and Cys-122–Cys-127. The NxI motif motif lies at 88–90; it reads NSI. N-linked (GlcNAc...) asparagine glycosylation is found at Asn-134 and Asn-147. Asn-147 carries GPI-anchor amidated asparagine lipidation. Positions 148 to 171 are cleaved as a propeptide — removed in mature form; that stretch reads QTNGHPHCVSVIVSCLWVWLGLTL.

Interacts with nicotinic acetylcholine receptors (nAChRs) including CHRNA3, CHRNA4, CHRNA5, CHRNA6, CHRNA7, CHRNB2 and CHRNB4. Interacts (via NxI motif) with LRP6. In terms of tissue distribution, detected in the frontal cortex and hippocampus (at protein level). Highly expressed in the brain and spinal cord, as well as dorsal root and trigeminal ganglia.

Its subcellular location is the secreted. It localises to the cytoplasm. The protein resides in the cell membrane. The protein localises to the synapse. It is found in the synaptosome. Its subcellular location is the membrane raft. It localises to the cell projection. The protein resides in the dendrite. The protein localises to the perikaryon. Functionally, acts as a modulator of nicotinic acetylcholine receptors (nAChRs) function in the brain. Inhibits nicotine-induced Ca(2+) influx through nAChRs. In vitro, specifically inhibits alpha-3:beta-4 and alpha-7 nAChR currents in an allosteric manner. Acts as a positive regulator of Wnt/beta-catenin signaling. This chain is Ly6/PLAUR domain-containing protein 6 (Lypd6), found in Mus musculus (Mouse).